The primary structure comprises 275 residues: 2,3,4,5-tetrahydropyridine-2,6-dicarboxylate N-succinyltransferase (275 aa).

Arginine 104 and aspartate 141 together coordinate substrate.

It belongs to the transferase hexapeptide repeat family. As to quaternary structure, homotrimer.

Its subcellular location is the cytoplasm. The catalysed reaction is (S)-2,3,4,5-tetrahydrodipicolinate + succinyl-CoA + H2O = (S)-2-succinylamino-6-oxoheptanedioate + CoA. The protein operates within amino-acid biosynthesis; L-lysine biosynthesis via DAP pathway; LL-2,6-diaminopimelate from (S)-tetrahydrodipicolinate (succinylase route): step 1/3. The protein is 2,3,4,5-tetrahydropyridine-2,6-dicarboxylate N-succinyltransferase of Actinobacillus succinogenes (strain ATCC 55618 / DSM 22257 / CCUG 43843 / 130Z).